The primary structure comprises 24 residues: 29 kDa outer membrane protein (24 aa).

The protein localises to the cell outer membrane. Its function is as follows. May be involved in transporting molecules across the outer membrane. In Acinetobacter baumannii, this protein is 29 kDa outer membrane protein.